Consider the following 49-residue polypeptide: MRVNITLECTECGDRNYITTKNKRENPERIELKKYCPRLRRVTLHRETK.

It belongs to the bacterial ribosomal protein bL33 family.

The chain is Large ribosomal subunit protein bL33B from Listeria welshimeri serovar 6b (strain ATCC 35897 / DSM 20650 / CCUG 15529 / CIP 8149 / NCTC 11857 / SLCC 5334 / V8).